The sequence spans 246 residues: mRNA-decapping protein g5R (246 aa).

The 147-residue stretch at 93–239 (QKFRKNWLLP…IIGPAFNFIK (147 aa)) folds into the Nudix hydrolase domain. The Nudix box signature appears at 128–149 (GKPKEDESDLTCAIREFEEETG). Glutamate 134 is a Mg(2+) binding site. The active-site Nucleophile is glutamate 143. Mg(2+) contacts are provided by glutamate 147 and aspartate 169.

This sequence belongs to the Nudix hydrolase family. DIPP subfamily. As to quaternary structure, interacts with host RPL23A. Mg(2+) serves as cofactor. It depends on Mn(2+) as a cofactor.

Its subcellular location is the host rough endoplasmic reticulum. It carries out the reaction diphospho-myo-inositol polyphosphate + H2O = myo-inositol polyphosphate + phosphate.. Its function is as follows. Decapping enzyme required for the removal of the 5'-end m7GpppN cap tethered to viral and host mRNAs to allow their decay in cells. May therefore accelerate viral and cellular mRNA turnover to eliminate competing host mRNAs and allow stage-specific synthesis of viral proteins. Acceleration of the turnover of cellular transcripts may even promote the shutoff of host protein synthesis. In addition to the mRNA cap, g5R also efficiently hydrolyzes diphosphoinositol polyphosphates. Down-regulation of the level of PP-InsP5 (diphosphoinositol pentakisphosphate) may play a role in viral manipulation of the cellular secretory pathway, a step necessary for the formation of virions. Binds viral and cellular poly(A) mRNAs, thereby decreasing both types of mRNAs. This African swine fever virus (isolate Warthog/Namibia/Wart80/1980) (ASFV) protein is mRNA-decapping protein g5R.